A 302-amino-acid chain; its full sequence is N-acetyl-D-glucosamine kinase (302 aa).

Residues 4 to 11 (GFDVGGTK) and 133 to 140 (GFGGGLVF) each bind ATP. Zn(2+)-binding residues include His157, Cys177, Cys179, and Cys184.

The protein belongs to the ROK (NagC/XylR) family. NagK subfamily.

The enzyme catalyses N-acetyl-D-glucosamine + ATP = N-acetyl-D-glucosamine 6-phosphate + ADP + H(+). It participates in cell wall biogenesis; peptidoglycan recycling. Its function is as follows. Catalyzes the phosphorylation of N-acetyl-D-glucosamine (GlcNAc) derived from cell-wall degradation, yielding GlcNAc-6-P. This is N-acetyl-D-glucosamine kinase from Aliivibrio salmonicida (strain LFI1238) (Vibrio salmonicida (strain LFI1238)).